Here is a 200-residue protein sequence, read N- to C-terminus: MARVLVVLSVVVASLFFSQGATFENQRLFNNAVIRVQHLHQLAAKMMDDFEEALLPEERKQLSKIFPLSFCNSDSIEAPAGKDETQKSSVLKLLHTSYRLIESWEFPSKNLGNPNHISEKLADLKMGIGVLIEGCVDGQTSLDENDAFAPPFEDFYQTLSEGNLKKSFRLLSCFKKDMHKVETYLSVAKCRRSLDSNCTL.

The N-terminal stretch at 1–22 (MARVLVVLSVVVASLFFSQGAT) is a signal peptide. Position 38 (H38) interacts with Zn(2+). A disulfide bond links C71 and C173. Position 182 (E182) interacts with Zn(2+). C190 and C198 are oxidised to a cystine.

Belongs to the somatotropin/prolactin family.

Its subcellular location is the secreted. In terms of biological role, growth hormone plays an important role in growth control and is involved in the regulation of several anabolic processes. Implicated as an osmoregulatory substance important for seawater adaptation. This is Somatotropin (gh) from Heteropneustes fossilis (Stinging catfish).